The primary structure comprises 175 residues: Colicin-B immunity protein (175 aa).

3 helical membrane-spanning segments follow: residues 14–32 (ILYAFSIIGIIPLMAILIL), 104–121 (CFWGPVFYAILIYITLFY), and 149–168 (IYFTVLTMTYAILLMPLLVI).

It localises to the cell inner membrane. This protein is able to protect a cell, which harbors the plasmid ColB encoding colicin B, against colicin B. This chain is Colicin-B immunity protein (cbi), found in Escherichia coli.